Here is a 465-residue protein sequence, read N- to C-terminus: VGFKAGVKDYKLTYYTPEYKTKDTDILAAFRVTPQPGVPPEEAGAAVAAESSTGTWTTVWTDGLTSLDRYKGRCYHIETVTGEENQFIVYVAYPLDLFEEGSVTNMFTSIVGDVFGFKALRALRLEDLRIPPAYSKTFQGPPHGIQVERDKLNKYGRPLLGCTIKPKLGLSAKNYGRAVYECLRGGLDFTKDDENVNSQPFMRWRDRFLFCAEALYKAQAETGEIKGHYLNATAGTCEEMIKRAVFARELGVPIVMHDYLTGGFTANTTLSYYCRDNGLLLHIHRAMHAVIDRQKNHGIHFRVLAKALRMSGGDHIHSGIVVGKLEGERDITLGFVDLLRDDLVEEDRSRGIYFTQDWVSLPGVLPVASGGIHVWHMPALTEIFGDDSVLQFGGGTLGHPWGNAPGAVANRVALEACVQARNEGRDLAREGNEIIREASKWSPELAAACEVWKEIKFEFEAMDTL.

K4 carries the N6,N6,N6-trimethyllysine modification. T163 is a substrate binding site. The active-site Proton acceptor is the K165. A substrate-binding site is contributed by K167. 3 residues coordinate Mg(2+): K191, D193, and E194. Position 191 is an N6-carboxylysine (K191). H284 acts as the Proton acceptor in catalysis. The substrate site is built by R285, H317, and S369.

The protein belongs to the RuBisCO large chain family. Type I subfamily. As to quaternary structure, heterohexadecamer of 8 large chains and 8 small chains; disulfide-linked. The disulfide link is formed within the large subunit homodimers. Mg(2+) is required as a cofactor. The disulfide bond which can form in the large chain dimeric partners within the hexadecamer appears to be associated with oxidative stress and protein turnover.

It localises to the plastid. The protein localises to the chloroplast. It catalyses the reaction 2 (2R)-3-phosphoglycerate + 2 H(+) = D-ribulose 1,5-bisphosphate + CO2 + H2O. The catalysed reaction is D-ribulose 1,5-bisphosphate + O2 = 2-phosphoglycolate + (2R)-3-phosphoglycerate + 2 H(+). In terms of biological role, ruBisCO catalyzes two reactions: the carboxylation of D-ribulose 1,5-bisphosphate, the primary event in carbon dioxide fixation, as well as the oxidative fragmentation of the pentose substrate in the photorespiration process. Both reactions occur simultaneously and in competition at the same active site. This Trochodendron aralioides (Wheel tree) protein is Ribulose bisphosphate carboxylase large chain.